Consider the following 193-residue polypeptide: Peptidyl-tRNA hydrolase (193 aa).

Residue Y17 coordinates tRNA. Residue H22 is the Proton acceptor of the active site. Y68, N70, and N116 together coordinate tRNA.

The protein belongs to the PTH family. As to quaternary structure, monomer.

It is found in the cytoplasm. The enzyme catalyses an N-acyl-L-alpha-aminoacyl-tRNA + H2O = an N-acyl-L-amino acid + a tRNA + H(+). Functionally, hydrolyzes ribosome-free peptidyl-tRNAs (with 1 or more amino acids incorporated), which drop off the ribosome during protein synthesis, or as a result of ribosome stalling. Its function is as follows. Catalyzes the release of premature peptidyl moieties from peptidyl-tRNA molecules trapped in stalled 50S ribosomal subunits, and thus maintains levels of free tRNAs and 50S ribosomes. The protein is Peptidyl-tRNA hydrolase of Acinetobacter baumannii (strain AB0057).